The following is a 780-amino-acid chain: ATP-dependent 6-phosphofructokinase, muscle type (780 aa).

An N-acetylthreonine modification is found at threonine 2. The N-terminal catalytic PFK domain 1 stretch occupies residues 2–390; it reads THEEHHAAKT…NWEVYKLLAH (389 aa). ATP-binding positions include glycine 25, 88–89, and 118–121; these read RC and GDGS. Aspartate 119 is a binding site for Mg(2+). Serine 133 bears the Phosphoserine mark. Residues 164 to 166, arginine 201, 208 to 210, glutamate 264, arginine 292, and 298 to 301 each bind substrate; these read SID, MGR, and HVQR. The Proton acceptor role is filled by aspartate 166. At serine 377 the chain carries Phosphoserine. Residues 391-401 are interdomain linker; that stretch reads VRPPVSKSGSH. Positions 402–780 are C-terminal regulatory PFK domain 2; it reads TVAVMNVGAP…TRKRSGEGAV (379 aa). Beta-D-fructose 2,6-bisphosphate contacts are provided by residues arginine 471 and 528–532; that span reads TVSNN. The O-linked (GlcNAc) serine glycan is linked to serine 530. N6-(2-hydroxyisobutyryl)lysine is present on lysine 557. Beta-D-fructose 2,6-bisphosphate is bound by residues arginine 566, 573–575, glutamate 629, arginine 655, and 661–664; these read MGG and HMQQ. Serine 667 is subject to Phosphoserine. Arginine 735 contacts beta-D-fructose 2,6-bisphosphate. Serine 775 carries the post-translational modification Phosphoserine.

This sequence belongs to the phosphofructokinase type A (PFKA) family. ATP-dependent PFK group I subfamily. Eukaryotic two domain clade 'E' sub-subfamily. Homo- and heterotetramers. Phosphofructokinase (PFK) enzyme functions as a tetramer composed of different combinations of 3 types of subunits, called PFKM (M), PFKL (L) and PFKP (P). The composition of the PFK tetramer differs according to the tissue type it is present in. The kinetic and regulatory properties of the tetrameric enzyme are dependent on the subunit composition, hence can vary across tissues. Interacts (via C-terminus) with HK1 (via N-terminal spermatogenic cell-specific region). Requires Mg(2+) as cofactor. Post-translationally, glcNAcylation decreases enzyme activity.

Its subcellular location is the cytoplasm. It catalyses the reaction beta-D-fructose 6-phosphate + ATP = beta-D-fructose 1,6-bisphosphate + ADP + H(+). Its pathway is carbohydrate degradation; glycolysis; D-glyceraldehyde 3-phosphate and glycerone phosphate from D-glucose: step 3/4. Allosterically activated by ADP, AMP, or fructose 2,6-bisphosphate, and allosterically inhibited by ATP or citrate. Its function is as follows. Catalyzes the phosphorylation of D-fructose 6-phosphate to fructose 1,6-bisphosphate by ATP, the first committing step of glycolysis. This Macaca fascicularis (Crab-eating macaque) protein is ATP-dependent 6-phosphofructokinase, muscle type (PFKM).